Here is a 658-residue protein sequence, read N- to C-terminus: Glycine--tRNA ligase beta subunit (658 aa).

The protein belongs to the class-II aminoacyl-tRNA synthetase family. As to quaternary structure, tetramer of two alpha and two beta subunits.

Its subcellular location is the cytoplasm. It carries out the reaction tRNA(Gly) + glycine + ATP = glycyl-tRNA(Gly) + AMP + diphosphate. In Rickettsia bellii (strain OSU 85-389), this protein is Glycine--tRNA ligase beta subunit.